The following is a 70-amino-acid chain: Homeobox protein OTX2 (70 aa).

The segment at 34–70 is disordered; that stretch reads HQLPGPGATLSPMGTNAVTSHLNQSPASLSTQGYGAS. Polar residues predominate over residues 45-70; sequence PMGTNAVTSHLNQSPASLSTQGYGAS.

It belongs to the paired homeobox family. Bicoid subfamily.

It is found in the nucleus. Its function is as follows. Transcription factor probably involved in the development of the brain and the sense organs. Can bind to the bicoid/BCD target sequence (BTS): 5'-TCTAATCCC-3'. This chain is Homeobox protein OTX2 (Otx2), found in Rattus norvegicus (Rat).